The sequence spans 208 residues: Imidazole glycerol phosphate synthase subunit HisH (208 aa).

The 206-residue stretch at 1 to 206 folds into the Glutamine amidotransferase type-1 domain; sequence MIVIIDYDTG…KEVTYSCKSS (206 aa). The Nucleophile role is filled by Cys-79. Catalysis depends on residues His-181 and Glu-183.

As to quaternary structure, heterodimer of HisH and HisF.

The protein resides in the cytoplasm. The enzyme catalyses 5-[(5-phospho-1-deoxy-D-ribulos-1-ylimino)methylamino]-1-(5-phospho-beta-D-ribosyl)imidazole-4-carboxamide + L-glutamine = D-erythro-1-(imidazol-4-yl)glycerol 3-phosphate + 5-amino-1-(5-phospho-beta-D-ribosyl)imidazole-4-carboxamide + L-glutamate + H(+). The catalysed reaction is L-glutamine + H2O = L-glutamate + NH4(+). It functions in the pathway amino-acid biosynthesis; L-histidine biosynthesis; L-histidine from 5-phospho-alpha-D-ribose 1-diphosphate: step 5/9. In terms of biological role, IGPS catalyzes the conversion of PRFAR and glutamine to IGP, AICAR and glutamate. The HisH subunit catalyzes the hydrolysis of glutamine to glutamate and ammonia as part of the synthesis of IGP and AICAR. The resulting ammonia molecule is channeled to the active site of HisF. This chain is Imidazole glycerol phosphate synthase subunit HisH, found in Listeria monocytogenes serovar 1/2a (strain ATCC BAA-679 / EGD-e).